We begin with the raw amino-acid sequence, 888 residues long: Dilute domain-containing protein YPR089W (888 aa).

Residues 360–745 (DIVLQSYWLS…KKFLNNKIKD (386 aa)) form the Dilute domain. 3 disordered regions span residues 462-504 (KEQQ…NNSS), 805-827 (KQRQNEPQISRTNSGTSDFTGDE), and 865-888 (LNIPSSTAQRPAWSNNDDMEQNPW). Polar residues-rich tracts occupy residues 809-823 (NEPQISRTNSGTSDF) and 867-880 (IPSSTAQRPAWSNN).

Its subcellular location is the golgi apparatus. The protein is Dilute domain-containing protein YPR089W of Saccharomyces cerevisiae (strain ATCC 204508 / S288c) (Baker's yeast).